The sequence spans 61 residues: Putative antitoxin VapB13 (61 aa).

It belongs to the UPF0165 family.

Its function is as follows. Possibly the antitoxin component of a type II toxin-antitoxin (TA) system. Its cognate toxin is VapC13 (Potential). This Archaeoglobus fulgidus (strain ATCC 49558 / DSM 4304 / JCM 9628 / NBRC 100126 / VC-16) protein is Putative antitoxin VapB13 (vapB13).